A 245-amino-acid chain; its full sequence is Carboxy-S-adenosyl-L-methionine synthase (245 aa).

S-adenosyl-L-methionine contacts are provided by residues tyrosine 42, 67-69, 92-93, 120-121, asparagine 135, and arginine 202; these read GCS, DN, and DI.

It belongs to the class I-like SAM-binding methyltransferase superfamily. Cx-SAM synthase family. As to quaternary structure, homodimer.

The catalysed reaction is prephenate + S-adenosyl-L-methionine = carboxy-S-adenosyl-L-methionine + 3-phenylpyruvate + H2O. Functionally, catalyzes the conversion of S-adenosyl-L-methionine (SAM) to carboxy-S-adenosyl-L-methionine (Cx-SAM). In Vibrio vulnificus (strain YJ016), this protein is Carboxy-S-adenosyl-L-methionine synthase.